We begin with the raw amino-acid sequence, 470 residues long: Solvent efflux pump outer membrane protein SrpC (470 aa).

A signal peptide spans 1–16 (MKFKSLPMFALLMLGG). C17 carries N-palmitoyl cysteine lipidation. The S-diacylglycerol cysteine moiety is linked to residue C17. The segment at 104-123 (LDGQASGNRTRLPDDLSPTG) is disordered.

It belongs to the outer membrane factor (OMF) (TC 1.B.17) family.

The protein localises to the cell outer membrane. The outer membrane component of an organic solvent efflux pump. Involved in export of a number of low log POW compounds including hexane (log POW 3.5), toluene (log POW 2.5) and dimethylphthalate (log POW 2.3). The solvent resistance phenotype has been postulated to depend on the operon expression level. This is Solvent efflux pump outer membrane protein SrpC (srpC) from Pseudomonas putida (Arthrobacter siderocapsulatus).